The primary structure comprises 117 residues: Small ribosomal subunit protein bS18c (117 aa).

A disordered region spans residues Ser-86–Phe-117.

The protein belongs to the bacterial ribosomal protein bS18 family. As to quaternary structure, part of the 30S ribosomal subunit.

The protein resides in the plastid. The chain is Small ribosomal subunit protein bS18c from Cuscuta exaltata (Tall dodder).